Here is a 235-residue protein sequence, read N- to C-terminus: Transcription factor MYB59 (235 aa).

HTH myb-type domains are found at residues 5–57 (QEEY…VNYL) and 58–112 (HPGL…RKKA). Positions 33–57 (WDFVAKVSGLNRTGKSCRLRWVNYL) form a DNA-binding region, H-T-H motif. The short motif at 62–65 (KRGK) is the Bipartite nuclear localization signal 1 element. Positions 85–108 (WSKIARKLPGRTDNEIKNYWRTHM) form a DNA-binding region, H-T-H motif. A Bipartite nuclear localization signal 2 motif is present at residues 109–117 (RKKAQEKKR). The segment at 109–147 (RKKAQEKKRPMSPTSSSSNCCSSSMTTTTSQDTGGSNGK) is disordered. The span at 119-138 (MSPTSSSSNCCSSSMTTTTS) shows a compositional bias: low complexity.

As to expression, mainly expressed in leaves and seedlings, and to a lower extent, in roots, stems and inflorescences. Isoform MYB59-1 and isoform MYB59-2 are present in roots, leaves, and seedlings, while the expression of isoform MYB59-3 and isoform MYB59-4 is confined to seedlings.

The protein localises to the nucleus. Its function is as follows. Transcription factor. The protein is Transcription factor MYB59 (MYB59) of Arabidopsis thaliana (Mouse-ear cress).